The sequence spans 66 residues: Large ribosomal subunit protein bL33c (66 aa).

It belongs to the bacterial ribosomal protein bL33 family.

It is found in the plastid. It localises to the chloroplast. In Ceratophyllum demersum (Rigid hornwort), this protein is Large ribosomal subunit protein bL33c.